Consider the following 107-residue polypeptide: Phosphoribosyl-ATP pyrophosphatase (107 aa).

The protein belongs to the PRA-PH family.

The protein localises to the cytoplasm. The catalysed reaction is 1-(5-phospho-beta-D-ribosyl)-ATP + H2O = 1-(5-phospho-beta-D-ribosyl)-5'-AMP + diphosphate + H(+). The protein operates within amino-acid biosynthesis; L-histidine biosynthesis; L-histidine from 5-phospho-alpha-D-ribose 1-diphosphate: step 2/9. The protein is Phosphoribosyl-ATP pyrophosphatase of Bacillus cereus (strain Q1).